The chain runs to 146 residues: Lipoprotein signal peptidase (146 aa).

3 helical membrane passes run 10 to 30, 54 to 74, and 80 to 100; these read GLFV…LGGF, FLEG…LLFL, and FFVA…SNIL. Residues aspartate 110 and aspartate 127 contribute to the active site. The chain crosses the membrane as a helical span at residues 118-138; the sequence is FEFAIFNFADVMIDVAVALFL.

The protein belongs to the peptidase A8 family.

The protein resides in the cell inner membrane. It catalyses the reaction Release of signal peptides from bacterial membrane prolipoproteins. Hydrolyzes -Xaa-Yaa-Zaa-|-(S,diacylglyceryl)Cys-, in which Xaa is hydrophobic (preferably Leu), and Yaa (Ala or Ser) and Zaa (Gly or Ala) have small, neutral side chains.. Its pathway is protein modification; lipoprotein biosynthesis (signal peptide cleavage). In terms of biological role, this protein specifically catalyzes the removal of signal peptides from prolipoproteins. In Wolinella succinogenes (strain ATCC 29543 / DSM 1740 / CCUG 13145 / JCM 31913 / LMG 7466 / NCTC 11488 / FDC 602W) (Vibrio succinogenes), this protein is Lipoprotein signal peptidase.